We begin with the raw amino-acid sequence, 100 residues long: MASGKPKKKNPRLASGRKRARQGLKLNAANTSLRSKYRTAVKNVEKAVLAGDKTKATELFAKAQSVLDTIADKGIFHKNKAARDKSRLSAKVKALALAAA.

Residues 1–22 show a composition bias toward basic residues; it reads MASGKPKKKNPRLASGRKRARQ. Residues 1 to 26 are disordered; that stretch reads MASGKPKKKNPRLASGRKRARQGLKL.

Belongs to the bacterial ribosomal protein bS20 family.

Functionally, binds directly to 16S ribosomal RNA. In Acidovorax ebreus (strain TPSY) (Diaphorobacter sp. (strain TPSY)), this protein is Small ribosomal subunit protein bS20.